The sequence spans 453 residues: Choline kinase alpha (453 aa).

The disordered stretch occupies residues 22 to 81 (CGGNAAPTPGVGQQRDAAGELESKQLGGRTQPLALPPPPPPPLPLPPPPSPPLADEQPEP). Pro residues predominate over residues 55–73 (ALPPPPPPPLPLPPPPSPP). Position 71 is a phosphoserine (serine 71). ATP is bound by residues 113–119 (RGGLSNM), arginine 142, and 203–209 (QFIPSRR). A phosphocholine-binding site is contributed by 115–117 (GLS). N6-acetyllysine is present on lysine 243. A Phosphoserine modification is found at serine 275. 2 residues coordinate ATP: glutamine 304 and aspartate 326.

This sequence belongs to the choline/ethanolamine kinase family. Homodimer. Heterodimer with CHKB. As to quaternary structure, monomer; acetylation by KAT5 promotes dissociation of the homodimer and monomerization. Phosphorylated at Ser-275 by AMPK in response to glucose deprivation, leading to localization to lipid droplets. In terms of processing, acetylated by KAT5 at Lys-243 following phosphorylation by AMPK, leading to monomerization and conversion into a tyrosine-protein kinase. As to expression, expressed ubiquitously with the highest level in testis.

The protein localises to the cytoplasm. Its subcellular location is the cytosol. It is found in the lipid droplet. The catalysed reaction is choline + ATP = phosphocholine + ADP + H(+). It carries out the reaction ethanolamine + ATP = phosphoethanolamine + ADP + H(+). It catalyses the reaction L-tyrosyl-[protein] + ATP = O-phospho-L-tyrosyl-[protein] + ADP + H(+). It functions in the pathway phospholipid metabolism; phosphatidylcholine biosynthesis; phosphocholine from choline: step 1/1. It participates in phospholipid metabolism; phosphatidylethanolamine biosynthesis; phosphatidylethanolamine from ethanolamine: step 1/3. Plays a key role in phospholipid biosynthesis by catalyzing the phosphorylation of free choline to phosphocholine, the first step in phosphatidylcholine biosynthesis. Also phosphorylates ethanolamine, thereby contributing to phosphatidylethanolamine biosynthesis. Has higher activity with choline. Functionally, this isoform plays a key role in lipolysis of lipid droplets following glucose deprivation. In response to glucose deprivation, phosphorylated by AMPK, promoting localization to lipid droplets. Phosphorylation is followed by acetylation by KAT5, leading to dissociation of the homodimer into a monomer. Monomeric CHKA isoform 1 is converted into a tyrosine-protein kinase, which phosphorylates lipid droplet structural proteins PLIN2 and PLIN3, leading to lipolysis of lipid droplets. This chain is Choline kinase alpha (Chka), found in Mus musculus (Mouse).